A 523-amino-acid chain; its full sequence is Tryptophan 6-halogenase SttH (523 aa).

Residues G14, S40, I43, V46, V48, and A51 each coordinate FAD. K79 is an active-site residue. P97 contacts L-tryptophan. Residues V203 and L354 each contribute to the FAD site. T365 and G366 together coordinate chloride. I367 lines the FAD pocket. Positions 456 and 457 each coordinate L-tryptophan.

Belongs to the flavin-dependent halogenase family. Bacterial tryptophan halogenase subfamily. In terms of assembly, homodimer.

The catalysed reaction is L-tryptophan + FADH2 + chloride + O2 = 6-chloro-L-tryptophan + FAD + 2 H2O. The enzyme catalyses D-tryptophan + FADH2 + chloride + O2 = 6-chloro-D-tryptophan + FAD + 2 H2O. Catalyzes the chlorination of tryptophan (Trp) at C6 position to yield 6-chloro-tryptophan. Accepts both L and D-Trp as the substrates. The enzyme also uses bromide to yield 6-bromo-Trp. In vitro, can also catalyze the halogenation of 3-indolepropionic acid, N-methyltryptophan and non-indolic aromatic substrates such as kynurenine, anthranilamide and N-phenylanthranilic acid. The chain is Tryptophan 6-halogenase SttH from Streptomyces toxytricini (Actinomyces toxytricini).